The primary structure comprises 744 residues: Polyadenylate-binding protein, cytoplasmic and nuclear (744 aa).

A compositionally biased stretch (polar residues) spans 1 to 11; sequence MSEVANSTSPV. Positions 1-42 are disordered; that stretch reads MSEVANSTSPVQDGADANGAQINTNVPAASGDAPTPTTAAQQ. Low complexity predominate over residues 33–42; that stretch reads APTPTTAAQQ. RRM domains follow at residues 48–126, 136–213, 229–306, and 332–462; these read ASLY…WSQR, GNVF…HHIP, TNIY…RAQK, and VNLY…LAQR. 4 disordered regions span residues 368–411, 527–550, 607–651, and 723–744; these read EEKK…AGDK, GRGA…NAQQ, IAGG…PGVD, and VKNK…EEKA. Over residues 376-397 the composition is skewed to basic and acidic residues; it reads KEVKEEKKEDEKKEDEEAKEGS. Gly residues-rich tracts occupy residues 527–545, 609–632, and 640–649; these read GRGA…GRGG, GGPG…GGRG, and PQGGRPGGPG. Residues 647 to 724 form the PABC domain; sequence GPGVDMSVLS…AMSVYDEYVK (78 aa).

This sequence belongs to the polyadenylate-binding protein type-1 family.

The protein localises to the cytoplasm. The protein resides in the nucleus. Its function is as follows. Binds the poly(A) tail of mRNA. Appears to be an important mediator of the multiple roles of the poly(A) tail in mRNA biogenesis, stability and translation. In the nucleus, involved in both mRNA cleavage and polyadenylation. Is also required for efficient mRNA export to the cytoplasm. Acts in concert with a poly(A)-specific nuclease (PAN) to affect poly(A) tail shortening, which may occur concomitantly with either nucleocytoplasmic mRNA transport or translational initiation. In the cytoplasm, stimulates translation initiation and regulates mRNA decay through translation termination-coupled poly(A) shortening, probably mediated by PAN. This is Polyadenylate-binding protein, cytoplasmic and nuclear (PAB1) from Phaeosphaeria nodorum (strain SN15 / ATCC MYA-4574 / FGSC 10173) (Glume blotch fungus).